Here is a 617-residue protein sequence, read N- to C-terminus: Threonine--tRNA ligase (617 aa).

The tract at residues 209–502 (DHRRLGKDLD…MTENYAGDFP (294 aa)) is catalytic. Zn(2+) contacts are provided by Cys302, His353, and His479.

Belongs to the class-II aminoacyl-tRNA synthetase family. Homodimer. Requires Zn(2+) as cofactor.

It is found in the cytoplasm. The enzyme catalyses tRNA(Thr) + L-threonine + ATP = L-threonyl-tRNA(Thr) + AMP + diphosphate + H(+). In terms of biological role, catalyzes the attachment of threonine to tRNA(Thr) in a two-step reaction: L-threonine is first activated by ATP to form Thr-AMP and then transferred to the acceptor end of tRNA(Thr). Also edits incorrectly charged L-seryl-tRNA(Thr). This chain is Threonine--tRNA ligase, found in Synechococcus sp. (strain CC9311).